We begin with the raw amino-acid sequence, 89 residues long: Small ribosomal subunit protein uS17 (89 aa).

Belongs to the universal ribosomal protein uS17 family. In terms of assembly, part of the 30S ribosomal subunit.

Its function is as follows. One of the primary rRNA binding proteins, it binds specifically to the 5'-end of 16S ribosomal RNA. This chain is Small ribosomal subunit protein uS17, found in Lactiplantibacillus plantarum (strain ATCC BAA-793 / NCIMB 8826 / WCFS1) (Lactobacillus plantarum).